The primary structure comprises 532 residues: Probable cytochrome c oxidase subunit 1 (532 aa).

8 consecutive transmembrane segments (helical) span residues 33–53 (IMYIIFAVFAGIVGGLFSLLF), 74–94 (VLITAHAVIMVFFMIMPALFG), 95–115 (GFGNYFVPLLIGAPDMAFPRL), 118–138 (ISFWLLVTAFILLMGSAFVDG), 163–183 (MAIFSLHLTGLSSILGSINLI), 200–220 (PLFVWSILVTAFLIILAMPVL), 252–272 (LFWFFGHPEVYIVILPGFGIV), and 284–304 (IFGYQGMVGAMVIIGFVGFIV). His79 provides a ligand contact to Fe(II)-heme a. Residues His258 and Tyr262 each coordinate Cu cation. Positions 307 and 308 each coordinate Cu cation. The next 2 membrane-spanning stretches (helical) occupy residues 318-338 (ALIYFTAGTMIIAVPTGIKIF) and 355-375 (MLFSIGFIILFTIGGVTGIIL). His393 is a heme a3 binding site. The next 3 membrane-spanning stretches (helical) occupy residues 394–414 (FHYTMSLGALFTAFAGFYYWF), 431–451 (FWITFIGVNLTFFPQHFLGLA), and 473–493 (IGAGISMAAALYFVFIVFYTL). His395 is a Fe(II)-heme a binding site.

The protein belongs to the heme-copper respiratory oxidase family.

It localises to the cell membrane. The enzyme catalyses 4 Fe(II)-[cytochrome c] + O2 + 8 H(+)(in) = 4 Fe(III)-[cytochrome c] + 2 H2O + 4 H(+)(out). The protein operates within energy metabolism; oxidative phosphorylation. In terms of biological role, cytochrome c oxidase is the component of the respiratory chain that catalyzes the reduction of oxygen to water. Subunits 1-3 form the functional core of the enzyme complex. CO I is the catalytic subunit of the enzyme. Electrons originating in cytochrome c are transferred via the copper A center of subunit 2 and heme A of subunit 1 to the bimetallic center formed by heme A3 and copper B. In Rickettsia felis (strain ATCC VR-1525 / URRWXCal2) (Rickettsia azadi), this protein is Probable cytochrome c oxidase subunit 1 (ctaD).